We begin with the raw amino-acid sequence, 232 residues long: Acetate--CoA ligase [ADP-forming] I subunit beta (232 aa).

Residues 27–63 (KEILKLYGIPVPEFKVARNEEEAVKFSGEIGYPVVMK) form the ATP-grasp domain. 53–64 (SGEIGYPVVMKI) serves as a coordination point for ATP.

It belongs to the acetate CoA ligase beta subunit family. As to quaternary structure, heterotetramer of two alpha and two beta subunits.

The protein resides in the cytoplasm. The enzyme catalyses acetate + ATP + CoA = acetyl-CoA + ADP + phosphate. With respect to regulation, activity is dependent on magnesium. Catalyzes the reversible formation of acetate and ATP from acetyl-CoA by using ADP and phosphate. Can use other substrates such as isobutyryl-CoA, propionyl-CoA and butyryl-CoA, but not indoleacetyl-CoA, phenylacetyl-CoA or succinyl-CoA. Seems to be involved primarily in the conversion of acetyl-CoA to acetate. Participates in the degradation of branched-chain amino acids via branched-chain-acyl-CoA esters. This chain is Acetate--CoA ligase [ADP-forming] I subunit beta, found in Pyrococcus furiosus (strain ATCC 43587 / DSM 3638 / JCM 8422 / Vc1).